We begin with the raw amino-acid sequence, 317 residues long: Probable pathogenesis-related protein CaO19.6200 (317 aa).

An N-terminal signal peptide occupies residues 1 to 23 (MKFLQSFPVILAVFSFAANLVSS). 2 disordered regions span residues 52–116 (RLET…TTVT) and 155–179 (PSAP…DSQL). A compositionally biased stretch (low complexity) spans 58-76 (PTSTTTTIVIPSSKPSSPE). 2 stretches are compositionally biased toward polar residues: residues 84-116 (QPMF…TTVT) and 168-179 (ENNSGTNDDSQL). N169 carries an N-linked (GlcNAc...) asparagine glycan. In terms of domain architecture, SCP spans 187–297 (LEAHNIKRAS…GWGLYIICNY (111 aa)).

It belongs to the CRISP family.

Its subcellular location is the secreted. Secreted protein that acts as a virulence factor during infections. This is Probable pathogenesis-related protein CaO19.6200 from Candida albicans (strain SC5314 / ATCC MYA-2876) (Yeast).